Reading from the N-terminus, the 306-residue chain is Putative S-adenosyl-L-methionine-dependent methyltransferase Mvan_1345 (306 aa).

S-adenosyl-L-methionine is bound by residues D134 and 163-164; that span reads DL.

Belongs to the UPF0677 family.

In terms of biological role, exhibits S-adenosyl-L-methionine-dependent methyltransferase activity. This is Putative S-adenosyl-L-methionine-dependent methyltransferase Mvan_1345 from Mycolicibacterium vanbaalenii (strain DSM 7251 / JCM 13017 / BCRC 16820 / KCTC 9966 / NRRL B-24157 / PYR-1) (Mycobacterium vanbaalenii).